Here is a 396-residue protein sequence, read N- to C-terminus: S-adenosylmethionine synthase (396 aa).

His16 contacts ATP. Asp18 is a Mg(2+) binding site. K(+) is bound at residue Glu44. 2 residues coordinate L-methionine: Glu57 and Gln100. Residues 100–110 form a flexible loop region; it reads QSQDIARGVDN. Residues 162 to 164, Asp237, 243 to 244, Ala260, and Lys264 each bind ATP; these read DGK and RK. Asp237 provides a ligand contact to L-methionine. Lys268 is an L-methionine binding site.

This sequence belongs to the AdoMet synthase family. In terms of assembly, homotetramer; dimer of dimers. It depends on Mg(2+) as a cofactor. K(+) is required as a cofactor.

It is found in the cytoplasm. The catalysed reaction is L-methionine + ATP + H2O = S-adenosyl-L-methionine + phosphate + diphosphate. Its pathway is amino-acid biosynthesis; S-adenosyl-L-methionine biosynthesis; S-adenosyl-L-methionine from L-methionine: step 1/1. Its function is as follows. Catalyzes the formation of S-adenosylmethionine (AdoMet) from methionine and ATP. The overall synthetic reaction is composed of two sequential steps, AdoMet formation and the subsequent tripolyphosphate hydrolysis which occurs prior to release of AdoMet from the enzyme. The polypeptide is S-adenosylmethionine synthase (Myxococcus xanthus).